A 39-amino-acid polypeptide reads, in one-letter code: Phosphatase RapI inhibitor (39 aa).

The propeptide occupies 1–34 (MKISRILLAAVILSSVFSITYLQSDHNTEIKVAA).

This sequence belongs to the Phr family. Post-translationally, contains a predicted signal peptide cleavage site in the N-terminal region, however the propeptide is probably subject to only one processing event, at the N-terminal end of the mature peptide.

It is found in the secreted. The protein resides in the cytoplasm. Functionally, intercellular signaling molecule that inhibits excision of the mobile genetic element ICEBs1 when cells are crowded by cells that contain ICEBs1 and produce the PhrI peptide. Secreted during production, but the mature peptide acts intracellularly, indicating that it needs to be imported into the cell to function. Acts by inhibiting RapI activity. This Bacillus subtilis (strain 168) protein is Phosphatase RapI inhibitor (phrI).